A 285-amino-acid polypeptide reads, in one-letter code: Bis(5'-nucleosyl)-tetraphosphatase, symmetrical (285 aa).

Belongs to the Ap4A hydrolase family.

The catalysed reaction is P(1),P(4)-bis(5'-adenosyl) tetraphosphate + H2O = 2 ADP + 2 H(+). In terms of biological role, hydrolyzes diadenosine 5',5'''-P1,P4-tetraphosphate to yield ADP. In Pseudomonas entomophila (strain L48), this protein is Bis(5'-nucleosyl)-tetraphosphatase, symmetrical.